Consider the following 450-residue polypeptide: 23S rRNA (uracil(1939)-C(5))-methyltransferase RlmD (450 aa).

Positions 1–62 constitute a TRAM domain; that stretch reads MPVAGPLDIV…PSYEQAGVVN (62 aa). The [4Fe-4S] cluster site is built by C75, C81, C84, and C163. Q271, F300, N305, E321, N349, and D370 together coordinate S-adenosyl-L-methionine. C406 acts as the Nucleophile in catalysis.

This sequence belongs to the class I-like SAM-binding methyltransferase superfamily. RNA M5U methyltransferase family. RlmD subfamily.

It catalyses the reaction uridine(1939) in 23S rRNA + S-adenosyl-L-methionine = 5-methyluridine(1939) in 23S rRNA + S-adenosyl-L-homocysteine + H(+). Catalyzes the formation of 5-methyl-uridine at position 1939 (m5U1939) in 23S rRNA. The polypeptide is 23S rRNA (uracil(1939)-C(5))-methyltransferase RlmD (Ralstonia pickettii (strain 12J)).